The primary structure comprises 441 residues: Polycomb protein EED (441 aa).

The tract at residues 1 to 72 is disordered; the sequence is MSEREVSTAP…PGRKSWGKGK (72 aa). Ser2 is modified (N-acetylserine). A phosphoserine mark is found at Ser2 and Ser34. A compositionally biased stretch (polar residues) spans 45-61; that stretch reads ESGTNTERPDTPTNTPN. Thr55 bears the Phosphothreonine mark. Lys66 bears the N6,N6,N6-trimethyllysine; alternate mark. An N6,N6-dimethyllysine; alternate modification is found at Lys66. Residue Lys66 is modified to N6-methyllysine; alternate. The interaction with EZH2 stretch occupies residues 81–441; the sequence is SFKCVNSLKE…ASIWRWDRLR (361 aa). WD repeat units lie at residues 91–134, 142–185, 188–228, and 234–275; these read DHNQ…EIRL, DADE…CIKH, GHGN…LVAI, and GHRD…NAIK. Required for interaction with the matrix protein MA of HIV-1 regions lie at residues 149-303 and 301-441; these read TCAW…STRD and TRDI…DRLR. Residues Lys197, Lys268, and Lys284 each carry the N6,N6,N6-trimethyllysine; alternate modification. Residues Lys197, Lys268, and Lys284 each carry the N6,N6-dimethyllysine; alternate modification. Lys197, Lys268, and Lys284 each carry N6-methyllysine; alternate. 3 WD repeats span residues 304 to 341, 359 to 399, and 408 to 441; these read IHRN…DDID, SQCD…PHKA, and KCGA…DRLR.

Belongs to the WD repeat ESC family. As to quaternary structure, component of the PRC2/EED-EZH2 complex, which includes EED, EZH2, SUZ12, RBBP4 and RBBP7 and possibly AEBP2. The minimum components required for methyltransferase activity of the PRC2/EED-EZH2 complex are EED, EZH2 and SUZ12. Component of the PRC2/EED-EZH1 complex, which includes EED, EZH1, SUZ12, RBBP4 and AEBP2. The PRC2 complex may also interact with DNMT1, DNMT3A, DNMT3B and PHF1 via the EZH2 subunit and with SIRT1 via the SUZ12 subunit. Interacts with HDAC, HDAC2, histone H1 and YY1. May interact with ITGA4, ITGAE and ITGB7. Interacts with CDYL. Interacts with BMAL1. Interacts with KMT2A/MLL1. In terms of assembly, (Microbial infection) May interact with the MA protein of HIV-1. Methylated. Binding to histone H1 'Lys-26' promotes mono-, di-, and trimethylation of internal lysines. As to expression, expressed in brain, colon, heart, kidney, liver, lung, muscle, ovary, peripheral blood leukocytes, pancreas, placenta, prostate, spleen, small intestine, testis, thymus and uterus. Appears to be overexpressed in breast and colon cancer.

It is found in the nucleus. The protein resides in the chromosome. Polycomb group (PcG) protein. Component of the PRC2/EED-EZH2 complex, which methylates 'Lys-9' and 'Lys-27' of histone H3, leading to transcriptional repression of the affected target gene. Also recognizes 'Lys-26' trimethylated histone H1 with the effect of inhibiting PRC2 complex methyltransferase activity on nucleosomal histone H3 'Lys-27', whereas H3 'Lys-27' recognition has the opposite effect, enabling the propagation of this repressive mark. The PRC2/EED-EZH2 complex may also serve as a recruiting platform for DNA methyltransferases, thereby linking two epigenetic repression systems. Genes repressed by the PRC2/EED-EZH2 complex include HOXC8, HOXA9, MYT1 and CDKN2A. The sequence is that of Polycomb protein EED from Homo sapiens (Human).